The primary structure comprises 383 residues: 8-amino-7-oxononanoate synthase (383 aa).

Arg23 provides a ligand contact to substrate. 110 to 111 (GF) serves as a coordination point for pyridoxal 5'-phosphate. His135 lines the substrate pocket. Pyridoxal 5'-phosphate contacts are provided by Ser181, His209, and Thr235. The residue at position 238 (Lys238) is an N6-(pyridoxal phosphate)lysine. Thr351 lines the substrate pocket.

This sequence belongs to the class-II pyridoxal-phosphate-dependent aminotransferase family. BioF subfamily. Homodimer. Requires pyridoxal 5'-phosphate as cofactor.

It catalyses the reaction 6-carboxyhexanoyl-[ACP] + L-alanine + H(+) = (8S)-8-amino-7-oxononanoate + holo-[ACP] + CO2. Its pathway is cofactor biosynthesis; biotin biosynthesis. Catalyzes the decarboxylative condensation of pimeloyl-[acyl-carrier protein] and L-alanine to produce 8-amino-7-oxononanoate (AON), [acyl-carrier protein], and carbon dioxide. The polypeptide is 8-amino-7-oxononanoate synthase (Aliivibrio salmonicida (strain LFI1238) (Vibrio salmonicida (strain LFI1238))).